Reading from the N-terminus, the 30-residue chain is Cyclotide cycloviolacin O17 (30 aa).

The cyclopeptide (Gly-Asn) cross-link spans 1 to 30 (GIPCGESCVWIPCISAAIGCSCKNKVCYRN). Disulfide bonds link C4-C20, C8-C22, and C13-C27.

In terms of processing, this is a cyclic peptide.

Probably participates in a plant defense mechanism. The polypeptide is Cyclotide cycloviolacin O17 (Psychotria brachyceras).